A 610-amino-acid polypeptide reads, in one-letter code: Atypical kinase COQ8, mitochondrial (610 aa).

The span at 98 to 111 (GVKHLQEQSSKEIK) shows a compositional bias: basic and acidic residues. The disordered stretch occupies residues 98-144 (GVKHLQEQSSKEIKNPISQPILPNKKDEISPAKPSAIDSSIKDVTKS).

This sequence belongs to the protein kinase superfamily. ADCK protein kinase family.

It is found in the mitochondrion. It functions in the pathway cofactor biosynthesis; ubiquinone biosynthesis. Atypical kinase involved in the biosynthesis of coenzyme Q, also named ubiquinone, an essential lipid-soluble electron transporter for aerobic cellular respiration. Its substrate specificity is still unclear: may act as a protein kinase that mediates phosphorylation of coq3. According to other reports, acts as a small molecule kinase, possibly a lipid kinase that phosphorylates a prenyl lipid in the ubiquinone biosynthesis pathway, as suggested by its ability to bind coenzyme Q lipid intermediates. The protein is Atypical kinase COQ8, mitochondrial of Schizosaccharomyces pombe (strain 972 / ATCC 24843) (Fission yeast).